A 219-amino-acid polypeptide reads, in one-letter code: Large ribosomal subunit protein uL4 (219 aa).

Residues Ala45 to Thr103 form a disordered region. Residues Gly62 to Gly73 are compositionally biased toward basic residues.

This sequence belongs to the universal ribosomal protein uL4 family. Part of the 50S ribosomal subunit.

In terms of biological role, one of the primary rRNA binding proteins, this protein initially binds near the 5'-end of the 23S rRNA. It is important during the early stages of 50S assembly. It makes multiple contacts with different domains of the 23S rRNA in the assembled 50S subunit and ribosome. Its function is as follows. Forms part of the polypeptide exit tunnel. This Corynebacterium kroppenstedtii (strain DSM 44385 / JCM 11950 / CIP 105744 / CCUG 35717) protein is Large ribosomal subunit protein uL4.